Consider the following 394-residue polypeptide: MSNWGDYENEIYGQGLVGVAPTLPMSYADWEAHAQQALPPGVLSYVAGGSGDEHTQRANVEAFKHWGLMPRMLMAATERDLSVELWGKTWAAPMFFAPIGVIALCAQDGHGDAASAQASARTGVPYITSTLAVSSLEDIRKHAGDTPAYFQLYYPEDRDLAESFIRRAEEAGYDGLVITLDTWIFGWRPRDLTISNFPFLRGLCLTNYVTDPVFQKKFKAHSGVEAEGLRDNPRLAADFWHGLFGHSVTWEDIDWVRSITKMPVILKGIQHPDDARRAVDSGVDGIYCSNHGGRQANGGLPALDCLPEVVKASGDTPVLFDSGIRTGADVVKALAMGASAVGIGRPYAWGAALGGSKGIEHVARSLLAEADLIMAVDGYRNLKELTIDALRPTR.

The 376-residue stretch at 19–394 (VAPTLPMSYA…LTIDALRPTR (376 aa)) folds into the FMN hydroxy acid dehydrogenase domain. An a 2-oxocarboxylate-binding site is contributed by Tyr-45. FMN contacts are provided by residues 98-100 (PIG), Ser-129, and Gln-151. An a 2-oxocarboxylate-binding site is contributed by Tyr-153. Thr-179 contributes to the FMN binding site. Arg-188 serves as a coordination point for a 2-oxocarboxylate. Lys-267 serves as a coordination point for FMN. The active-site Proton acceptor is His-291. Arg-294 serves as a coordination point for a 2-oxocarboxylate. Residues 321–325 (DSGIR) and Arg-345 contribute to the FMN site.

It belongs to the FMN-dependent alpha-hydroxy acid dehydrogenase family. Homotetramer. The cofactor is FMN.

The catalysed reaction is (S)-lactate + O2 = acetate + CO2 + H2O. In terms of biological role, catalyzes the oxidative decarboxylation of (S)-lactate (L-lactate) to acetate and carbon dioxide. Its physiological role remains unknown. The chain is L-lactate 2-monooxygenase from Mycolicibacterium smegmatis (Mycobacterium smegmatis).